A 377-amino-acid polypeptide reads, in one-letter code: Guanine nucleotide-binding protein subunit alpha-13 (377 aa).

Residues cysteine 14 and cysteine 18 are each lipidated (S-palmitoyl cysteine). A G-alpha domain is found at 47–377; the sequence is RLVKILLLGA…HDNLKQLMLQ (331 aa). The segment at 50-63 is G1 motif; the sequence is KILLLGAGESGKST. Residues 58–63, serine 173, and 197–200 contribute to the GTP site; these read ESGKST and LLAR. Mg(2+) is bound at residue serine 62. The segment at 195 to 203 is G2 motif; the sequence is DILLARRPT. Threonine 203 lines the Mg(2+) pocket. Threonine 203 is modified (phosphothreonine). Residues 218–227 are G3 motif; the sequence is FKMVDVGGQR. Residues 287 to 294 are G4 motif; sequence ILFLNKTD. Residues 291–294 and alanine 349 contribute to the GTP site; that span reads NKTD. The segment at 347-352 is G5 motif; sequence TTAINT.

This sequence belongs to the G-alpha family. G(12) subfamily. In terms of assembly, g proteins are composed of 3 units; alpha, beta and gamma. The alpha chain contains the guanine nucleotide binding site. Interacts with UBXD5. Interacts with HAX1. Interacts (in GTP-bound form) with PPP5C (via TPR repeats); activates PPP5C phosphatase activity and translocates PPP5C to the cell membrane. Interacts with RGS22. Interacts (in GTP-bound form) with ARHGEF1. Interacts (in GTP-bound form) with ARHGEF11 (via RGS domain). Interacts (in GTP-bound form) with ARHGEF12 (via RGS domain). Interacts with CTNND1. Interacts with GAS2L2. Interacts with GPR35. Interacts with GPR174. Phosphorylation on Thr-203 destabilizes the heterotrimer of alpha, beta and gamma, and inhibits Rho activation. As to expression, expressed in brain and testis, as well as in kidney and sperm (at protein level).

Its subcellular location is the membrane. It localises to the melanosome. It is found in the cytoplasm. The protein resides in the nucleus. Its function is as follows. Guanine nucleotide-binding proteins (G proteins) are involved as modulators or transducers in various transmembrane signaling systems. Activates effector molecule RhoA by binding and activating RhoGEFs (ARHGEF1/p115RhoGEF, ARHGEF11/PDZ-RhoGEF and ARHGEF12/LARG). GNA13-dependent Rho signaling subsequently regulates transcription factor AP-1 (activating protein-1). Promotes tumor cell invasion and metastasis by activating Rho/ROCK signaling pathway. Inhibits CDH1-mediated cell adhesion in a process independent from Rho activation. In lymphoid follicles, transmits P2RY8- and S1PR2-dependent signals that lead to inhibition of germinal center (GC) B cell growth and migration outside the GC niche. The sequence is that of Guanine nucleotide-binding protein subunit alpha-13 (Gna13) from Mus musculus (Mouse).